A 101-amino-acid polypeptide reads, in one-letter code: Apolipoprotein C-II (101 aa).

Positions 1-22 (MGTRCLLVLLLVLLVLRCDVQG) are cleaved as a signal peptide. The propeptide at 23-28 (DDMARQ) is removed in mature form. Residues 66–74 (AVDEKIRDM) form a lipid binding region. A lipoprotein lipase cofactor region spans residues 78–101 (STAAVRIYTGILTDQILSMLSGDS).

This sequence belongs to the apolipoprotein C2 family. Proapolipoprotein C-II is synthesized as a sialic acid containing glycoprotein which is subsequently desialylated prior to its proteolytic processing. Post-translationally, proapolipoprotein C-II, the major form found in plasma undergoes proteolytic cleavage of its N-terminal hexapeptide to generate the mature form apolipoprotein C-II, which occurs as the minor form in plasma.

It localises to the secreted. Its function is as follows. Component of chylomicrons, very low-density lipoproteins (VLDL), low-density lipoproteins (LDL), and high-density lipoproteins (HDL) in plasma. Plays an important role in lipoprotein metabolism as an activator of lipoprotein lipase, the enzyme which hydrolyzes the triacylglycerols on chylomicrons and VLDL. The protein is Apolipoprotein C-II (APOC2) of Acinonyx jubatus (Cheetah).